A 1415-amino-acid chain; its full sequence is G8 domain-containing protein DDB_G0278975 (1415 aa).

An N-terminal signal peptide occupies residues 1 to 24; the sequence is MKINKIILFFFLSCLYLFSSSVSA. Transmembrane regions (helical) follow at residues 107 to 127 and 138 to 158; these read INLN…GLFT and LLFI…SIKI. N-linked (GlcNAc...) asparagine glycans are attached at residues Asn245, Asn366, Asn428, Asn466, and Asn579. A G8 domain is found at 566–692; the sequence is STWPNGIIPS…YHNTWSKLSA (127 aa). PbH1 repeat units lie at residues 819–841 and 842–864; these read LKNS…TIHG and TNNV…YLED. Asn844, Asn985, Asn1009, Asn1023, Asn1099, Asn1244, and Asn1342 each carry an N-linked (GlcNAc...) asparagine glycan.

It belongs to the comF family.

It localises to the membrane. The polypeptide is G8 domain-containing protein DDB_G0278975 (Dictyostelium discoideum (Social amoeba)).